Here is a 304-residue protein sequence, read N- to C-terminus: Recombination-associated protein RdgC (304 aa).

It belongs to the RdgC family.

The protein localises to the cytoplasm. It is found in the nucleoid. May be involved in recombination. The sequence is that of Recombination-associated protein RdgC from Shewanella baltica (strain OS195).